The chain runs to 569 residues: MMRFTKFYAPSLKEAPKDASLPSHIFLTRAGFVEQIGSGLYNFLPLGKRVLDKIKNIVKEEMDKAGAQEVNLSFITPASLWQESGRYNVFGKELLRFKDRKENEFVLGPTHEEAMLSLVKNKITSYKQLPLHLYQIGLKFRDEARPRFGLLRCREFLMKDGYSFHANEEDLGREFELMYKTYSQILQRMGLDFRAVEADSGAIGGSGSKEFMVLAKNGEDDILICENCDYAANVEAAKRAKKTCQDERPEANYASKFHTPNIKTIDSLAQFFKINAFYTIKAVVKKAIYENESKLVVFFIRGSDDLQEVKAQNTCSALELVDASEEELKKAGLVAGFIGFVGLKDIDFYIDFELENEKQMIMGANEKDYHLIGIDVVNLNKDRFKDLIEVKEGDCCVKCGAKLKQSKGIEVGHIFKLGQKYSKAMNANFLDENGKSQPFYMGCYGIGVSRLLAVAIEANHDEKGCIWNKTLAPFVLEIIVSNLKDEKALEFANKLYRDLTNLGLEVLLDDRNERFGVKMNDFELMGFPYALVIGKGLENNEIELIQREGLVKELIKTDELMEILKKKVL.

The protein belongs to the class-II aminoacyl-tRNA synthetase family. ProS type 1 subfamily. In terms of assembly, homodimer.

It localises to the cytoplasm. It carries out the reaction tRNA(Pro) + L-proline + ATP = L-prolyl-tRNA(Pro) + AMP + diphosphate. Its function is as follows. Catalyzes the attachment of proline to tRNA(Pro) in a two-step reaction: proline is first activated by ATP to form Pro-AMP and then transferred to the acceptor end of tRNA(Pro). As ProRS can inadvertently accommodate and process non-cognate amino acids such as alanine and cysteine, to avoid such errors it has two additional distinct editing activities against alanine. One activity is designated as 'pretransfer' editing and involves the tRNA(Pro)-independent hydrolysis of activated Ala-AMP. The other activity is designated 'posttransfer' editing and involves deacylation of mischarged Ala-tRNA(Pro). The misacylated Cys-tRNA(Pro) is not edited by ProRS. The protein is Proline--tRNA ligase of Campylobacter jejuni subsp. jejuni serotype O:2 (strain ATCC 700819 / NCTC 11168).